A 198-amino-acid chain; its full sequence is Transcriptional regulator GfcR (198 aa).

The protein belongs to the purine/pyrimidine phosphoribosyltransferase family. GfcR subfamily.

This Thermoplasma acidophilum (strain ATCC 25905 / DSM 1728 / JCM 9062 / NBRC 15155 / AMRC-C165) protein is Transcriptional regulator GfcR.